A 65-amino-acid chain; its full sequence is Sulfur carrier protein TtuB (65 aa).

Position 65 is a 1-thioglycine; alternate (G65). G65 is subject to Glycyl adenylate; alternate. G65 is covalently cross-linked (Glycyl cysteine thioester (Gly-Cys) (interchain with C-192 in TtuC); alternate). Residue G65 forms a Glycyl lysine isopeptide (Gly-Lys) (interchain with K-? in acceptor proteins); alternate linkage.

Belongs to the TtuB family. As to quaternary structure, is able to form a heterocomplex with TtuA. The C-terminal glycine residue of TtuB is first activated by TtuC as an acyl-adenylate (TtuB-COAMP), and then converted to the thiocarboxylate form (TtuB-COSH) by the cysteine desulfurases IscS or SufS.

It functions in the pathway tRNA modification. Functionally, required for the 2-thiolation of 5-methyluridine residue at position 54 in the T loop of tRNAs, leading to 5-methyl-2-thiouridine (m(5)s(2)U or s(2)T). This modification allows thermal stabilization of tRNAs in thermophilic microorganisms, and is essential for cell growth at high temperatures. Thiocarboxylated TtuB functions as the sulfur donor in the sulfurtransferase reaction catalyzed by TtuA. TtuB also functions as a protein modifier covalently attached to lysine residues of the target proteins TtuA and TtuC. TtuB conjugation might play a regulatory role to ensure appropriate sulfur transfer in cells. This chain is Sulfur carrier protein TtuB, found in Thermus thermophilus (strain ATCC BAA-163 / DSM 7039 / HB27).